The sequence spans 441 residues: Ubiquitin carboxyl-terminal hydrolase MINDY-3 (441 aa).

The active-site Nucleophile is Cys-51. His-284 serves as the catalytic Proton acceptor.

The protein belongs to the MINDY deubiquitinase family. FAM188 subfamily.

It localises to the nucleus. It carries out the reaction Thiol-dependent hydrolysis of ester, thioester, amide, peptide and isopeptide bonds formed by the C-terminal Gly of ubiquitin (a 76-residue protein attached to proteins as an intracellular targeting signal).. Hydrolase that can remove 'Lys-48'-linked conjugated ubiquitin from proteins. This Xenopus tropicalis (Western clawed frog) protein is Ubiquitin carboxyl-terminal hydrolase MINDY-3 (mindy3).